The following is a 413-amino-acid chain: Glucose-1-phosphate adenylyltransferase (413 aa).

Alpha-D-glucose 1-phosphate contacts are provided by residues glycine 163, glutamate 179–lysine 180, and serine 197.

Belongs to the bacterial/plant glucose-1-phosphate adenylyltransferase family. Homotetramer.

The enzyme catalyses alpha-D-glucose 1-phosphate + ATP + H(+) = ADP-alpha-D-glucose + diphosphate. The protein operates within glycan biosynthesis; glycogen biosynthesis. Its function is as follows. Involved in the biosynthesis of ADP-glucose, a building block required for the elongation reactions to produce glycogen. Catalyzes the reaction between ATP and alpha-D-glucose 1-phosphate (G1P) to produce pyrophosphate and ADP-Glc. The protein is Glucose-1-phosphate adenylyltransferase of Parafrankia sp. (strain EAN1pec).